Here is a 436-residue protein sequence, read N- to C-terminus: GTPase Der (436 aa).

EngA-type G domains follow at residues 4–167 (PTVA…PNEI) and 175–351 (IKFS…HAQN). GTP-binding positions include 10–17 (GRPNVGKS), 57–61 (DTGGI), 119–122 (NKVD), 181–188 (GRPNVGKS), 229–233 (DTAGM), and 294–297 (NKWD). The KH-like domain occupies 352 to 436 (LRISSSVLND…PVHLIARKRK (85 aa)).

It belongs to the TRAFAC class TrmE-Era-EngA-EngB-Septin-like GTPase superfamily. EngA (Der) GTPase family. In terms of assembly, associates with the 50S ribosomal subunit.

Its function is as follows. GTPase that plays an essential role in the late steps of ribosome biogenesis. In Lactococcus lactis subsp. lactis (strain IL1403) (Streptococcus lactis), this protein is GTPase Der.